A 154-amino-acid chain; its full sequence is Large ribosomal subunit protein uL13 (154 aa).

The interval 132 to 154 (PHEAQQPETLDVGAMNRKNKRAA) is disordered.

This sequence belongs to the universal ribosomal protein uL13 family. In terms of assembly, part of the 50S ribosomal subunit.

In terms of biological role, this protein is one of the early assembly proteins of the 50S ribosomal subunit, although it is not seen to bind rRNA by itself. It is important during the early stages of 50S assembly. This chain is Large ribosomal subunit protein uL13, found in Rhodopseudomonas palustris (strain HaA2).